A 150-amino-acid polypeptide reads, in one-letter code: Ribosome-binding factor A (150 aa).

The segment at valine 119–threonine 150 is disordered.

The protein belongs to the RbfA family. Monomer. Binds 30S ribosomal subunits, but not 50S ribosomal subunits or 70S ribosomes.

It is found in the cytoplasm. Functionally, one of several proteins that assist in the late maturation steps of the functional core of the 30S ribosomal subunit. Associates with free 30S ribosomal subunits (but not with 30S subunits that are part of 70S ribosomes or polysomes). Required for efficient processing of 16S rRNA. May interact with the 5'-terminal helix region of 16S rRNA. The chain is Ribosome-binding factor A from Acidothermus cellulolyticus (strain ATCC 43068 / DSM 8971 / 11B).